We begin with the raw amino-acid sequence, 155 residues long: Small ribosomal subunit protein uS8m (155 aa).

This sequence belongs to the universal ribosomal protein uS8 family. In terms of assembly, component of the mitochondrial small ribosomal subunit (mt-SSU). Mature yeast 74S mitochondrial ribosomes consist of a small (37S) and a large (54S) subunit. The 37S small subunit contains a 15S ribosomal RNA (15S mt-rRNA) and 34 different proteins. The 54S large subunit contains a 21S rRNA (21S mt-rRNA) and 46 different proteins.

It is found in the mitochondrion. In terms of biological role, component of the mitochondrial ribosome (mitoribosome), a dedicated translation machinery responsible for the synthesis of mitochondrial genome-encoded proteins, including at least some of the essential transmembrane subunits of the mitochondrial respiratory chain. The mitoribosomes are attached to the mitochondrial inner membrane and translation products are cotranslationally integrated into the membrane. The sequence is that of Small ribosomal subunit protein uS8m (MRPS8) from Saccharomyces cerevisiae (strain ATCC 204508 / S288c) (Baker's yeast).